A 142-amino-acid chain; its full sequence is Cytidine deaminase (142 aa).

One can recognise a CMP/dCMP-type deaminase domain in the interval 9 to 139 (RQLEALKRAA…ELLPMAFGPS (131 aa)). A substrate-binding site is contributed by 50–52 (NVE). Cys-61 serves as a coordination point for Zn(2+). Glu-63 acts as the Proton donor in catalysis. 2 residues coordinate Zn(2+): Cys-96 and Cys-99.

The protein belongs to the cytidine and deoxycytidylate deaminase family. As to quaternary structure, homodimer. It depends on Zn(2+) as a cofactor.

The enzyme catalyses cytidine + H2O + H(+) = uridine + NH4(+). It catalyses the reaction 2'-deoxycytidine + H2O + H(+) = 2'-deoxyuridine + NH4(+). This enzyme scavenges exogenous and endogenous cytidine and 2'-deoxycytidine for UMP synthesis. This chain is Cytidine deaminase (CDD1), found in Saccharomyces cerevisiae (strain ATCC 204508 / S288c) (Baker's yeast).